The primary structure comprises 89 residues: Small ribosomal subunit protein bS20 (89 aa).

Residues Met1–Asn21 form a disordered region. Residues Ala7 to Asn21 show a composition bias toward basic residues.

Belongs to the bacterial ribosomal protein bS20 family.

Its function is as follows. Binds directly to 16S ribosomal RNA. The chain is Small ribosomal subunit protein bS20 from Acinetobacter baylyi (strain ATCC 33305 / BD413 / ADP1).